The sequence spans 445 residues: Phosphoglucosamine mutase (445 aa).

The Phosphoserine intermediate role is filled by Ser-101. The Mg(2+) site is built by Ser-101, Asp-240, Asp-242, and Asp-244. The residue at position 101 (Ser-101) is a Phosphoserine.

Belongs to the phosphohexose mutase family. Mg(2+) is required as a cofactor. Post-translationally, activated by phosphorylation.

The enzyme catalyses alpha-D-glucosamine 1-phosphate = D-glucosamine 6-phosphate. In terms of biological role, catalyzes the conversion of glucosamine-6-phosphate to glucosamine-1-phosphate. This Pseudomonas fluorescens (strain ATCC BAA-477 / NRRL B-23932 / Pf-5) protein is Phosphoglucosamine mutase.